The primary structure comprises 780 residues: Aconitate hydratase, mitochondrial (780 aa).

Residues 1–27 (MAPYSLLVTRLQKALGVRQYHVASVLC) constitute a mitochondrion transit peptide. Lys31 is subject to N6-succinyllysine. The residue at position 50 (Lys50) is an N6-acetyllysine; alternate. Lys50 carries the N6-succinyllysine; alternate modification. Gln99 is a binding site for substrate. An N6-acetyllysine; alternate mark is found at Lys138 and Lys144. N6-succinyllysine; alternate is present on residues Lys138 and Lys144. 192-194 (DSH) provides a ligand contact to substrate. The residue at position 233 (Lys233) is an N6-acetyllysine; alternate. At Lys233 the chain carries N6-succinyllysine; alternate. Cys385 provides a ligand contact to [4Fe-4S] cluster. Lys411 carries the N6-succinyllysine modification. Positions 448 and 451 each coordinate [4Fe-4S] cluster. Residues Arg474 and Arg479 each contribute to the substrate site. An N6-acetyllysine; alternate mark is found at Lys517 and Lys523. 2 positions are modified to N6-succinyllysine; alternate: Lys517 and Lys523. Residues 524–537 (LEAPDADELPRSDF) are compositionally biased toward basic and acidic residues. Positions 524–560 (LEAPDADELPRSDFDPGQDTYQHPPKDSSGQRVDVSP) are disordered. An N6-succinyllysine modification is found at Lys549. The segment covering 551–560 (SSGQRVDVSP) has biased composition (polar residues). Ser559 bears the Phosphoserine mark. An N6-acetyllysine; alternate modification is found at Lys573. N6-succinyllysine; alternate is present on Lys573. Residues Lys577 and Lys591 each carry the N6-succinyllysine modification. The residue at position 605 (Lys605) is an N6-acetyllysine; alternate. N6-succinyllysine; alternate is present on Lys605. Position 607 (Arg607) interacts with substrate. Lys628 is modified (N6-succinyllysine). Ser670 bears the Phosphoserine mark. Position 670-671 (670-671 (SR)) interacts with substrate. Lys689 carries the N6-succinyllysine modification. N6-acetyllysine; alternate occurs at positions 723 and 730. N6-succinyllysine; alternate occurs at positions 723 and 730. Lys736, Lys739, and Lys743 each carry N6-acetyllysine.

This sequence belongs to the aconitase/IPM isomerase family. In terms of assembly, monomer. Requires [4Fe-4S] cluster as cofactor. Post-translationally, forms covalent cross-links mediated by transglutaminase TGM2, between a glutamine and the epsilon-amino group of a lysine residue, forming homopolymers and heteropolymers.

It is found in the mitochondrion. The catalysed reaction is citrate = D-threo-isocitrate. The protein operates within carbohydrate metabolism; tricarboxylic acid cycle; isocitrate from oxaloacetate: step 2/2. Catalyzes the isomerization of citrate to isocitrate via cis-aconitate. In Mus musculus (Mouse), this protein is Aconitate hydratase, mitochondrial (Aco2).